Reading from the N-terminus, the 142-residue chain is Large ribosomal subunit protein uL11 (142 aa).

Belongs to the universal ribosomal protein uL11 family. In terms of assembly, part of the ribosomal stalk of the 50S ribosomal subunit. Interacts with L10 and the large rRNA to form the base of the stalk. L10 forms an elongated spine to which L12 dimers bind in a sequential fashion forming a multimeric L10(L12)X complex. One or more lysine residues are methylated.

In terms of biological role, forms part of the ribosomal stalk which helps the ribosome interact with GTP-bound translation factors. This Solibacter usitatus (strain Ellin6076) protein is Large ribosomal subunit protein uL11.